The sequence spans 152 residues: Arginine repressor (152 aa).

This sequence belongs to the ArgR family.

It is found in the cytoplasm. It functions in the pathway amino-acid biosynthesis; L-arginine biosynthesis [regulation]. Regulates arginine biosynthesis genes. This Caldicellulosiruptor saccharolyticus (strain ATCC 43494 / DSM 8903 / Tp8T 6331) protein is Arginine repressor.